A 129-amino-acid chain; its full sequence is Small ribosomal subunit protein uS9 (129 aa).

This sequence belongs to the universal ribosomal protein uS9 family.

The polypeptide is Small ribosomal subunit protein uS9 (Chlorobium limicola (strain DSM 245 / NBRC 103803 / 6330)).